The chain runs to 349 residues: 2-oxoglutarate and iron-dependent oxygenase domain-containing protein 2 (349 aa).

A Fe2OG dioxygenase domain is found at 211 to 305 (DSHRAFVVKY…RWNLILWMRA (95 aa)). Residues His231, Asp233, and His286 each coordinate Fe cation. Residue Arg296 participates in 2-oxoglutarate binding.

The protein belongs to the OGFOD2 family. The cofactor is Fe(2+). L-ascorbate is required as a cofactor.

The chain is 2-oxoglutarate and iron-dependent oxygenase domain-containing protein 2 (ogfod2) from Xenopus tropicalis (Western clawed frog).